We begin with the raw amino-acid sequence, 119 residues long: Large ribosomal subunit protein uL18 (119 aa).

Basic and acidic residues predominate over residues 1-10; sequence MKKIKEAEQR. The interval 1–20 is disordered; sequence MKKIKEAEQRKLRRKKRIKD.

It belongs to the universal ribosomal protein uL18 family. Part of the 50S ribosomal subunit; part of the 5S rRNA/L5/L18/L25 subcomplex. Contacts the 5S and 23S rRNAs.

In terms of biological role, this is one of the proteins that bind and probably mediate the attachment of the 5S RNA into the large ribosomal subunit, where it forms part of the central protuberance. The polypeptide is Large ribosomal subunit protein uL18 (Borreliella burgdorferi (strain ATCC 35210 / DSM 4680 / CIP 102532 / B31) (Borrelia burgdorferi)).